Reading from the N-terminus, the 298-residue chain is Acetylglutamate kinase (298 aa).

Substrate contacts are provided by residues 61 to 62 (GG), Arg83, and Asn188.

The protein belongs to the acetylglutamate kinase family. ArgB subfamily.

It localises to the cytoplasm. It carries out the reaction N-acetyl-L-glutamate + ATP = N-acetyl-L-glutamyl 5-phosphate + ADP. Its pathway is amino-acid biosynthesis; L-arginine biosynthesis; N(2)-acetyl-L-ornithine from L-glutamate: step 2/4. Functionally, catalyzes the ATP-dependent phosphorylation of N-acetyl-L-glutamate. The sequence is that of Acetylglutamate kinase from Syntrophobacter fumaroxidans (strain DSM 10017 / MPOB).